The primary structure comprises 330 residues: MHFIDEVKIYIKGGNGGNGCVSFHREKFIDRGGPDGGDGGRGGSVIFRSNHHLNTLVNYRYKQHFTAENGENGKDSNRSGKSGKSLVLDVPIGTQIFSEDGNILLHDFTVDDQSFEIIKGGSGGLGNSHFKSSVNQAPRKRTEGEIAEEMWIHLSLKLLSDVGLVGFPNAGKSTFLSFVTAAKPKIADYPFTTLVPNLGVVYVDDEEFVIADIPGLIEGAHQGHGLGDKFLKHIERCNVLIHLIDGSSNDVVADYNTVRLELESYSDYLKNKIEIICLNKCDVLTDEEIQEKINKLQKVTNKEVFPISTYTNAGVNKIVKLALETIKNQE.

Residues 1-159 (MHFIDEVKIY…MWIHLSLKLL (159 aa)) enclose the Obg domain. The OBG-type G domain occupies 160 to 327 (SDVGLVGFPN…IVKLALETIK (168 aa)). Residues 166–173 (GFPNAGKS), 191–195 (FTTLV), 212–215 (DIPG), 279–282 (NKCD), and 308–310 (STY) each bind GTP. Mg(2+)-binding residues include S173 and T193.

Belongs to the TRAFAC class OBG-HflX-like GTPase superfamily. OBG GTPase family. As to quaternary structure, monomer. Requires Mg(2+) as cofactor.

Its subcellular location is the cytoplasm. Functionally, an essential GTPase which binds GTP, GDP and possibly (p)ppGpp with moderate affinity, with high nucleotide exchange rates and a fairly low GTP hydrolysis rate. Plays a role in control of the cell cycle, stress response, ribosome biogenesis and in those bacteria that undergo differentiation, in morphogenesis control. The protein is GTPase Obg of Rickettsia massiliae (strain Mtu5).